Reading from the N-terminus, the 281-residue chain is DegV domain-containing protein SCO2569 (281 aa).

The region spanning V5 to S280 is the DegV domain. T62 and S95 together coordinate hexadecanoate.

Functionally, may bind long-chain fatty acids, such as palmitate, and may play a role in lipid transport or fatty acid metabolism. The protein is DegV domain-containing protein SCO2569 of Streptomyces coelicolor (strain ATCC BAA-471 / A3(2) / M145).